A 129-amino-acid polypeptide reads, in one-letter code: Ribosome-binding factor A (129 aa).

Belongs to the RbfA family. Monomer. Binds 30S ribosomal subunits, but not 50S ribosomal subunits or 70S ribosomes.

Its subcellular location is the cytoplasm. Functionally, one of several proteins that assist in the late maturation steps of the functional core of the 30S ribosomal subunit. Associates with free 30S ribosomal subunits (but not with 30S subunits that are part of 70S ribosomes or polysomes). Required for efficient processing of 16S rRNA. May interact with the 5'-terminal helix region of 16S rRNA. This chain is Ribosome-binding factor A, found in Thioalkalivibrio sulfidiphilus (strain HL-EbGR7).